Here is a 100-residue protein sequence, read N- to C-terminus: Small ribosomal subunit protein uS14 (100 aa).

The protein belongs to the universal ribosomal protein uS14 family. In terms of assembly, part of the 30S ribosomal subunit. Contacts proteins S3 and S10.

Functionally, binds 16S rRNA, required for the assembly of 30S particles and may also be responsible for determining the conformation of the 16S rRNA at the A site. In Prochlorococcus marinus (strain MIT 9301), this protein is Small ribosomal subunit protein uS14.